A 746-amino-acid polypeptide reads, in one-letter code: Exostosin-1 (746 aa).

Residues 1-7 (MQAKKRY) are Cytoplasmic-facing. Residues 8–28 (FILLSAGSCLALLFYFGGLQF) traverse the membrane as a helical; Signal-anchor for type II membrane protein segment. Residues 29–746 (RASRSHSRRE…RKKYRDIERL (718 aa)) lie on the Lumenal side of the membrane. N-linked (GlcNAc...) asparagine glycosylation is present at asparagine 89. Intrachain disulfides connect cysteine 98–cysteine 103 and cysteine 109–cysteine 152. Positions 166 and 203 each coordinate a protein. Positions 267, 269, 271, and 280 each coordinate UDP. Residues cysteine 298 and cysteine 312 are joined by a disulfide bond. Histidine 300 serves as a coordination point for a protein. UDP is bound by residues tyrosine 319 and tyrosine 324. An N-linked (GlcNAc...) asparagine glycan is attached at asparagine 330. Cystine bridges form between cysteine 334–cysteine 355 and cysteine 652–cysteine 704. Residues arginine 346 and glutamate 349 each contribute to the UDP site.

It belongs to the glycosyltransferase 47 family. In terms of assembly, part of the heparan sulfate polymerase, a dimeric complex composed of EXT1 and EXT2. Could also form homooligomeric complexes. Interacts with NDST1. Post-translationally, N-glycosylated.

It localises to the golgi apparatus membrane. It is found in the golgi apparatus. The protein resides in the cis-Golgi network membrane. The protein localises to the endoplasmic reticulum membrane. The catalysed reaction is 3-O-{alpha-D-GlcNAc-[(1-&gt;4)-beta-D-GlcA-(1-&gt;4)-alpha-D-GlcNAc](n)-(1-&gt;4)-beta-D-GlcA-(1-&gt;3)-beta-D-Gal-(1-&gt;3)-beta-D-Gal-(1-&gt;4)-beta-D-Xyl}-L-seryl-[protein] + UDP-alpha-D-glucuronate = 3-O-{[(1-&gt;4)-beta-D-GlcA-(1-&gt;4)-alpha-D-GlcNAc](n+1)-(1-&gt;4)-beta-D-GlcA-(1-&gt;3)-beta-D-Gal-(1-&gt;3)-beta-D-Gal-(1-&gt;4)-beta-D-Xyl}-L-seryl-[protein] + UDP + H(+). Its pathway is protein modification; protein glycosylation. Functionally, glycosyltransferase forming with EXT2 the heterodimeric heparan sulfate polymerase which catalyzes the elongation of the heparan sulfate glycan backbone. Glycan backbone extension consists in the alternating transfer of (1-&gt;4)-beta-D-GlcA and (1-&gt;4)-alpha-D-GlcNAc residues from their respective UDP-sugar donors. Both EXT1 and EXT2 are required for the full activity of the polymerase since EXT1 bears the N-acetylglucosaminyl-proteoglycan 4-beta-glucuronosyltransferase activity within the complex while EXT2 carries the glucuronosyl-N-acetylglucosaminyl-proteoglycan 4-alpha-N-acetylglucosaminyltransferase activity. Heparan sulfate proteoglycans are ubiquitous components of the extracellular matrix and play an important role in tissue homeostasis and signaling. The sequence is that of Exostosin-1 (EXT1) from Pongo abelii (Sumatran orangutan).